The following is a 219-amino-acid chain: Protein DCL homolog, chloroplastic (219 aa).

A chloroplast-targeting transit peptide spans 1 to 48; the sequence is MSLASIPSSSPVASPYFRCRTYIFSFSSSPLCLYFPRGDSTSLRPRVR. The interval 70-96 is disordered; that stretch reads LRRPRIASEESSEEEEEEEEENSEGDE. Residues 79–96 are compositionally biased toward acidic residues; sequence ESSEEEEEEEEENSEGDE.

As to expression, expressed in leaves, stems, flowers and siliques.

It is found in the plastid. It localises to the chloroplast. Its function is as follows. Required for normal plastid function and plant development. Required for correct plastid ribosome assembly. Required for processing and maturation of 4.5S rRNA. In Arabidopsis thaliana (Mouse-ear cress), this protein is Protein DCL homolog, chloroplastic.